The sequence spans 93 residues: MKTLILLSALVLLAFQVQADPIQNTDEETKTEEQPGEDDQAVSVSFGDPEGSSLQEESLRDLVCYCRTRGCKRREHMNGTCRKGHLMYTLCCR.

Positions 1 to 19 (MKTLILLSALVLLAFQVQA) are cleaved as a signal peptide. Positions 20-58 (DPIQNTDEETKTEEQPGEDDQAVSVSFGDPEGSSLQEES) are excised as a propeptide. The disordered stretch occupies residues 22–56 (IQNTDEETKTEEQPGEDDQAVSVSFGDPEGSSLQE). 3 cysteine pairs are disulfide-bonded: Cys64/Cys92, Cys66/Cys81, and Cys71/Cys91.

The protein belongs to the alpha-defensin family. In terms of tissue distribution, paneth cells of the small bowel.

The protein localises to the secreted. In terms of biological role, probably contributes to the antimicrobial barrier function of the small bowel mucosa. The sequence is that of Alpha-defensin 7 (Defa7) from Mus musculus (Mouse).